The following is a 457-amino-acid chain: UPF0210 protein Sfum_2948 (457 aa).

The protein belongs to the UPF0210 family. In terms of assembly, homodimer.

In Syntrophobacter fumaroxidans (strain DSM 10017 / MPOB), this protein is UPF0210 protein Sfum_2948.